Consider the following 196-residue polypeptide: CMRF35-like molecule 2 (196 aa).

Residues 1–17 (MRLCAGLLLLCFQGCLS) form the signal peptide. Positions 18–122 (LTGPGSVSGY…DSWSRDPSVS (105 aa)) constitute an Ig-like V-type domain. Over 18–171 (LTGPGSVSGY…QLWSLLSSIQ (154 aa)) the chain is Extracellular. A disulfide bond links cysteine 36 and cysteine 104. A glycan (N-linked (GlcNAc...) asparagine) is linked at asparagine 84. The chain crosses the membrane as a helical span at residues 172 to 192 (FQVLVFLKLPLFLSMLCAIFW). The Cytoplasmic segment spans residues 193–196 (VNRL).

This sequence belongs to the CD300 family. In terms of assembly, interacts with TYROBP.

It localises to the cell membrane. Its function is as follows. Probably acts as an activating receptor. The sequence is that of CMRF35-like molecule 2 (Cd300e) from Mus musculus (Mouse).